We begin with the raw amino-acid sequence, 223 residues long: Large ribosomal subunit protein uL3 (223 aa).

This sequence belongs to the universal ribosomal protein uL3 family. As to quaternary structure, part of the 50S ribosomal subunit. Forms a cluster with proteins L14 and L19.

One of the primary rRNA binding proteins, it binds directly near the 3'-end of the 23S rRNA, where it nucleates assembly of the 50S subunit. The protein is Large ribosomal subunit protein uL3 of Cutibacterium acnes (strain DSM 16379 / KPA171202) (Propionibacterium acnes).